Reading from the N-terminus, the 440-residue chain is MKLWGGRFKEEESKLMEDFNSSLSFDKKLYYEDIKGSIAHVKMLANQNIIKEEEKEKILLGLEEILKEIDEGILKIEGDYEDIHSFVEINLINKIGNVGKKLHTGRSRNDQVALDMKLYAKKSTEEVIECLKELMDSLIKVGNENNYIMPGYTHLQRAQVVTFRYHLLAYFEMFKRDEKRLENALEFLNESPLGSGALAGSTYNIDREYTAKLLGFRKPVDNFLDGVSDRDYIIELISKFSIIMMHLSRLSEELILWSSSEFRFIQIGDAYSTGSSIMPQKKNPDGAELIRGKIGRVYGDLISILTVMKSLPLAYNKDMQEDKEPFFDAKDTVISCLKVMEGIISTLKVNKENLMKSVKKGFLNATEAADYLVNKGMAFRDAHKVIGEVVIYCEDKNSAIEDLSLEELKQFSDLFCEDIYEFIDYKNSINKGIKKEMGYF.

This sequence belongs to the lyase 1 family. Argininosuccinate lyase subfamily.

The protein resides in the cytoplasm. It catalyses the reaction 2-(N(omega)-L-arginino)succinate = fumarate + L-arginine. It functions in the pathway amino-acid biosynthesis; L-arginine biosynthesis; L-arginine from L-ornithine and carbamoyl phosphate: step 3/3. The sequence is that of Argininosuccinate lyase from Clostridium botulinum (strain 657 / Type Ba4).